A 637-amino-acid chain; its full sequence is ATP-dependent zinc metalloprotease FtsH (637 aa).

Residues 1–6 (MNNQGR) lie on the Cytoplasmic side of the membrane. The helical transmembrane segment at 7–27 (SILAWATLFIFVILLFNVFQS) threads the bilayer. Topologically, residues 28 to 103 (DSLLGGRNNI…VVPLETRMNT (76 aa)) are periplasmic. The chain crosses the membrane as a helical span at residues 104 to 124 (FLGFLISWFPMLLLIGVWVFF). The Cytoplasmic portion of the chain corresponds to 125 to 637 (MRQMHGGGKA…TKAKKENYAS (513 aa)). 195 to 202 (GPPGTGKT) contacts ATP. H417 provides a ligand contact to Zn(2+). E418 is an active-site residue. Zn(2+) contacts are provided by H421 and D495. The segment at 603–637 (ENKFPFNDSSTIKIDKEKSPEKTKTTKAKKENYAS) is disordered. The span at 615-637 (KIDKEKSPEKTKTTKAKKENYAS) shows a compositional bias: basic and acidic residues.

It in the central section; belongs to the AAA ATPase family. This sequence in the C-terminal section; belongs to the peptidase M41 family. In terms of assembly, homohexamer. Requires Zn(2+) as cofactor.

Its subcellular location is the cell inner membrane. Its function is as follows. Acts as a processive, ATP-dependent zinc metallopeptidase for both cytoplasmic and membrane proteins. Plays a role in the quality control of integral membrane proteins. This Rickettsia conorii (strain ATCC VR-613 / Malish 7) protein is ATP-dependent zinc metalloprotease FtsH.